A 714-amino-acid polypeptide reads, in one-letter code: T-cell activation Rho GTPase-activating protein (714 aa).

The Rho-GAP domain maps to 88–277; the sequence is QPLSIICGEN…FLIDNCFEIF (190 aa). 5 disordered regions span residues 290-357, 370-419, 451-508, 520-563, and 623-650; these read DDSL…ESSV, QDRR…AEDP, QGHI…HSMS, RTSS…QSQT, and KPST…HRLS. Residues 299–311 are compositionally biased toward polar residues; the sequence is SDVSTLQNDSAYD. A Phosphoserine modification is found at S398. The segment covering 459–471 has biased composition (low complexity); sequence SRSSPGESLGSSP. Composition is skewed to basic and acidic residues over residues 492 to 501 and 527 to 545; these read KTDKTKPQRE and EKSK…RKES.

In terms of tissue distribution, highly expressed in testis.

Its function is as follows. May function as a GTPase-activating protein. May play a role in transmission ratio distortion (TRD) in mouse, in which heterozygous males for t-locus transmit their t-carrying chromosome to 95% or more of their offspring. This Mus musculus (Mouse) protein is T-cell activation Rho GTPase-activating protein (Tagap).